The chain runs to 903 residues: Protein translocase subunit SecA (903 aa).

ATP is bound by residues glutamine 87, 105-109, and aspartate 513; that span reads GEGKT. A compositionally biased stretch (basic and acidic residues) spans 840 to 853; the sequence is MEAQRRAQAEEAAR. Residues 840–903 form a disordered region; sequence MEAQRRAQAE…KYKQCHGQIN (64 aa). Positions 887, 889, 898, and 899 each coordinate Zn(2+).

It belongs to the SecA family. Monomer and homodimer. Part of the essential Sec protein translocation apparatus which comprises SecA, SecYEG and auxiliary proteins SecDF-YajC and YidC. It depends on Zn(2+) as a cofactor.

It localises to the cell inner membrane. The protein localises to the cytoplasm. The catalysed reaction is ATP + H2O + cellular proteinSide 1 = ADP + phosphate + cellular proteinSide 2.. Functionally, part of the Sec protein translocase complex. Interacts with the SecYEG preprotein conducting channel. Has a central role in coupling the hydrolysis of ATP to the transfer of proteins into and across the cell membrane, serving both as a receptor for the preprotein-SecB complex and as an ATP-driven molecular motor driving the stepwise translocation of polypeptide chains across the membrane. This Vibrio cholerae serotype O1 (strain M66-2) protein is Protein translocase subunit SecA.